Here is a 499-residue protein sequence, read N- to C-terminus: Probable cytosol aminopeptidase (499 aa).

2 residues coordinate Mn(2+): Lys-269 and Asp-274. The active site involves Lys-281. 3 residues coordinate Mn(2+): Asp-292, Asp-351, and Glu-353. The active site involves Arg-355.

Belongs to the peptidase M17 family. Mn(2+) is required as a cofactor.

Its subcellular location is the cytoplasm. It catalyses the reaction Release of an N-terminal amino acid, Xaa-|-Yaa-, in which Xaa is preferably Leu, but may be other amino acids including Pro although not Arg or Lys, and Yaa may be Pro. Amino acid amides and methyl esters are also readily hydrolyzed, but rates on arylamides are exceedingly low.. It carries out the reaction Release of an N-terminal amino acid, preferentially leucine, but not glutamic or aspartic acids.. Functionally, presumably involved in the processing and regular turnover of intracellular proteins. Catalyzes the removal of unsubstituted N-terminal amino acids from various peptides. The chain is Probable cytosol aminopeptidase from Actinobacillus pleuropneumoniae serotype 7 (strain AP76).